Reading from the N-terminus, the 852-residue chain is Replication factor C small subunit (852 aa).

Residues 183–306 (WLGYFMGSGY…IAYALASFGI (124 aa)) enclose the DOD-type homing endonuclease domain.

It belongs to the activator 1 small subunits family. RfcS subfamily. Heteromultimer composed of three to four small subunits (RfcS) and one to two large subunits (RfcL). This protein undergoes a protein self splicing that involves a post-translational excision of the intervening region (intein) followed by peptide ligation.

In terms of biological role, part of the RFC clamp loader complex which loads the PCNA sliding clamp onto DNA. The complex possesses DNA-dependent ATPase activity which is further stimulated by PCNA. In Pyrococcus furiosus (strain ATCC 43587 / DSM 3638 / JCM 8422 / Vc1), this protein is Replication factor C small subunit (rfcS).